A 276-amino-acid chain; its full sequence is NAD kinase (276 aa).

Catalysis depends on aspartate 61, which acts as the Proton acceptor. NAD(+) is bound by residues 61-62 (DG), arginine 66, 135-136 (NE), arginine 146, histidine 163, aspartate 165, and alanine 200.

This sequence belongs to the NAD kinase family. A divalent metal cation serves as cofactor.

The protein resides in the cytoplasm. The catalysed reaction is NAD(+) + ATP = ADP + NADP(+) + H(+). Its function is as follows. Involved in the regulation of the intracellular balance of NAD and NADP, and is a key enzyme in the biosynthesis of NADP. Catalyzes specifically the phosphorylation on 2'-hydroxyl of the adenosine moiety of NAD to yield NADP. In Chloroflexus aggregans (strain MD-66 / DSM 9485), this protein is NAD kinase.